A 164-amino-acid chain; its full sequence is UPF0303 protein R02983 (164 aa).

Belongs to the UPF0303 family.

The protein is UPF0303 protein R02983 of Rhizobium meliloti (strain 1021) (Ensifer meliloti).